The following is a 249-amino-acid chain: Eukaryotic translation initiation factor 3 subunit K (249 aa).

One can recognise a PCI domain in the interval 46–222 (FDCYANLALL…VKVPSNKENE (177 aa)).

Belongs to the eIF-3 subunit K family. As to quaternary structure, component of the eukaryotic translation initiation factor 3 (eIF-3) complex.

Its subcellular location is the cytoplasm. Its function is as follows. Component of the eukaryotic translation initiation factor 3 (eIF-3) complex, which is involved in protein synthesis of a specialized repertoire of mRNAs and, together with other initiation factors, stimulates binding of mRNA and methionyl-tRNAi to the 40S ribosome. The eIF-3 complex specifically targets and initiates translation of a subset of mRNAs involved in cell proliferation. The protein is Eukaryotic translation initiation factor 3 subunit K of Aspergillus clavatus (strain ATCC 1007 / CBS 513.65 / DSM 816 / NCTC 3887 / NRRL 1 / QM 1276 / 107).